A 623-amino-acid polypeptide reads, in one-letter code: Leucine aminopeptidase 2 (623 aa).

Residues Met1 to Tyr23 are disordered. Positions Asn7–Tyr23 are enriched in polar residues. A peptide-binding positions include Gln145–Gln147 and Pro277–Glu282. His306 contributes to the Zn(2+) binding site. Glu307 (proton acceptor) is an active-site residue. 2 residues coordinate Zn(2+): His310 and Glu329. The Proton donor role is filled by Tyr394.

It belongs to the peptidase M1 family. Zn(2+) is required as a cofactor.

It is found in the cytoplasm. Its subcellular location is the nucleus. It carries out the reaction an epoxide + H2O = an ethanediol. Aminopeptidase that preferentially cleaves di- and tripeptides. Also has low epoxide hydrolase activity (in vitro). Can hydrolyze the epoxide leukotriene LTA(4) but it forms preferentially 5,6-dihydroxy-7,9,11,14-eicosatetraenoic acid rather than the cytokine leukotriene B(4) as the product compared to the homologous mammalian enzyme (in vitro). The polypeptide is Leucine aminopeptidase 2 (Ajellomyces capsulatus (strain NAm1 / WU24) (Darling's disease fungus)).